The following is a 281-amino-acid chain: Sulfur carrier protein FdhD (281 aa).

Residue Cys117 is the Cysteine persulfide intermediate of the active site.

It belongs to the FdhD family.

The protein localises to the cytoplasm. In terms of biological role, required for formate dehydrogenase (FDH) activity. Acts as a sulfur carrier protein that transfers sulfur from IscS to the molybdenum cofactor prior to its insertion into FDH. The chain is Sulfur carrier protein FdhD from Xanthomonas euvesicatoria pv. vesicatoria (strain 85-10) (Xanthomonas campestris pv. vesicatoria).